A 120-amino-acid polypeptide reads, in one-letter code: Glycine cleavage system H protein (120 aa).

One can recognise a Lipoyl-binding domain in the interval 17-99; it reads VATVGITEHA…QGAAWFFKLK (83 aa). Lysine 58 is modified (N6-lipoyllysine).

Belongs to the GcvH family. The glycine cleavage system is composed of four proteins: P, T, L and H. (R)-lipoate is required as a cofactor.

In terms of biological role, the glycine cleavage system catalyzes the degradation of glycine. The H protein shuttles the methylamine group of glycine from the P protein to the T protein. In Sinorhizobium fredii (strain NBRC 101917 / NGR234), this protein is Glycine cleavage system H protein.